The primary structure comprises 226 residues: Transcription factor bHLH115 (226 aa).

The bHLH domain maps to 66 to 117 (TGSNSKACREKQRRDRLNDKFTELSSVLEPGRTPKTDKVAIINDAIRMVNQA).

In terms of assembly, homodimer. Interacts with BTS and BHLH47/PYE.

It localises to the nucleus. This chain is Transcription factor bHLH115 (BHLH115), found in Arabidopsis thaliana (Mouse-ear cress).